The chain runs to 561 residues: Urocanate hydratase (561 aa).

Residues 52–53, Gln130, 176–178, Glu196, Arg201, 242–243, 263–267, 273–274, and Tyr322 each bind NAD(+); these read GG, GMG, NA, QTSAH, and YL. Cys410 is a catalytic residue. Gly492 contacts NAD(+).

The protein belongs to the urocanase family. NAD(+) is required as a cofactor.

It localises to the cytoplasm. It catalyses the reaction 4-imidazolone-5-propanoate = trans-urocanate + H2O. Its pathway is amino-acid degradation; L-histidine degradation into L-glutamate; N-formimidoyl-L-glutamate from L-histidine: step 2/3. In terms of biological role, catalyzes the conversion of urocanate to 4-imidazolone-5-propionate. This chain is Urocanate hydratase, found in Salmonella arizonae (strain ATCC BAA-731 / CDC346-86 / RSK2980).